We begin with the raw amino-acid sequence, 414 residues long: Tyrosine--tRNA ligase (414 aa).

Tyr-38 provides a ligand contact to L-tyrosine. The 'HIGH' region motif lies at 43 to 52 (PTAISLHLGN). Residues Tyr-165 and Gln-169 each coordinate L-tyrosine. The short motif at 227 to 231 (KIGKS) is the 'KMSKS' region element. Lys-230 is an ATP binding site. The S4 RNA-binding domain maps to 349–413 (DDLFLTLVDS…KGKKQYWVIY (65 aa)).

This sequence belongs to the class-I aminoacyl-tRNA synthetase family. TyrS type 1 subfamily. In terms of assembly, homodimer.

The protein resides in the cytoplasm. It catalyses the reaction tRNA(Tyr) + L-tyrosine + ATP = L-tyrosyl-tRNA(Tyr) + AMP + diphosphate + H(+). Catalyzes the attachment of tyrosine to tRNA(Tyr) in a two-step reaction: tyrosine is first activated by ATP to form Tyr-AMP and then transferred to the acceptor end of tRNA(Tyr). The protein is Tyrosine--tRNA ligase of Mycoplasmopsis pulmonis (strain UAB CTIP) (Mycoplasma pulmonis).